Consider the following 154-residue polypeptide: Large-conductance mechanosensitive channel (154 aa).

The next 2 helical transmembrane spans lie at 14-34 (VVDL…VNSL) and 86-106 (VFIN…FFVV).

It belongs to the MscL family. In terms of assembly, homopentamer.

The protein resides in the cell membrane. Functionally, channel that opens in response to stretch forces in the membrane lipid bilayer. May participate in the regulation of osmotic pressure changes within the cell. This chain is Large-conductance mechanosensitive channel, found in Dehalococcoides mccartyi (strain CBDB1).